The chain runs to 238 residues: Probable xyloglucan-specific endo-beta-1,4-glucanase A (238 aa).

The signal sequence occupies residues 1–18 (MKLSLSVALSLAASTAQA). Asparagine 106 and asparagine 171 each carry an N-linked (GlcNAc...) asparagine glycan.

It belongs to the glycosyl hydrolase 12 (cellulase H) family.

The protein localises to the secreted. It catalyses the reaction xyloglucan + H2O = xyloglucan oligosaccharides.. Its function is as follows. Catalyzes endohydrolysis of 1,4-beta-D-glucosidic linkages in xyloglucan with retention of the beta-configuration of the glycosyl residues. Specific for xyloglucan and does not hydrolyze other cell wall components. The protein is Probable xyloglucan-specific endo-beta-1,4-glucanase A (xgeA) of Aspergillus fumigatus (strain ATCC MYA-4609 / CBS 101355 / FGSC A1100 / Af293) (Neosartorya fumigata).